The sequence spans 355 residues: Homeotic protein knotted-1 (355 aa).

The segment at 205-233 is disordered; sequence KCEGVGSSEEDQDNSGGETELPEIDPRAE. Positions 236–256 constitute an ELK domain; that stretch reads ELKNHLLRKYSGYLSSLKQEL. The segment at residues 257–320 is a DNA-binding region (homeobox; TALE-type); sequence SKKKKKGKLP…NQRKRHWKPS (64 aa).

It belongs to the TALE/KNOX homeobox family. Expressed in the apical meristems, in the newly emerged lateral primordia in the floral bud, in their vascular bundles and in the cortex parenchyma of the floral pedicle. Also present in the lateral tips of leaf primordia.

It localises to the nucleus. Functionally, appears to be involved in meristem formation and in the regulation of leaf morphology. Misexpression makes the leaf more compound which is always associated with growth retardation and loss of apical dominance, resulting in dwarfed, bushy plants. Probably binds to the DNA sequence 5'-TGAC-3'. The protein is Homeotic protein knotted-1 (KN1) of Solanum lycopersicum (Tomato).